Consider the following 598-residue polypeptide: Probable transporter mch1 (598 aa).

A disordered region spans residues 1–49 (MASPTPAPRPDQISASTPLLQSDSTSSCASSIRSLSPSRRRHRNGRTSP). Residues 22 to 37 (SDSTSSCASSIRSLSP) show a composition bias toward low complexity. N57 carries an N-linked (GlcNAc...) asparagine glycan. 6 helical membrane-spanning segments follow: residues 63 to 83 (ALLS…GHIF), 96 to 116 (GLSS…GYMC), 122 to 142 (GPLS…AAGV), 164 to 184 (LAYA…CSMY), 202 to 222 (GLAL…QSQL), and 241 to 261 (VFHF…LGTF). The tract at residues 315 to 334 (AGILDPSKPDNDSDSEEEDD) is disordered. N325 carries N-linked (GlcNAc...) asparagine glycosylation. The next 6 helical transmembrane spans lie at 355–375 (HTMW…EAFI), 405–425 (IVGI…DLLA), 453–473 (FLLF…SGWI), 486–506 (LVGA…TVIW), 516–536 (GIVA…YSAV), and 565–585 (SAFW…LWAW).

It belongs to the major facilitator superfamily.

The protein localises to the vacuole membrane. In terms of biological role, probable transporter. This is Probable transporter mch1 (mch1) from Neurospora crassa (strain ATCC 24698 / 74-OR23-1A / CBS 708.71 / DSM 1257 / FGSC 987).